A 179-amino-acid polypeptide reads, in one-letter code: Apoptosis regulator Bcl-2 homolog (179 aa).

The BH1 motif lies at 76–95 (ELFKDLINWGRICGFIVFSA). Residues 126 to 141 (PWMISHGGQEEFLAFS) carry the BH2 motif.

Belongs to the Bcl-2 family. As to quaternary structure, interacts with host BECN1 (via BH3 homology domain); this interaction allows the virus to inhibit BECN1, and thus autophagy. Interacts with host BID. Interacts with host BAX.

It is found in the host mitochondrion. The protein localises to the host endoplasmic reticulum. Its function is as follows. Suppresses apoptosis in host cell to promote the viral replication. Has the ability to potentially bind to all the members of the proapoptotic Bcl-2 family. Inhibits autophagy by interacting with host Beclin 1 (BECN1). In Ornithodoros (relapsing fever ticks), this protein is Apoptosis regulator Bcl-2 homolog.